The following is a 730-amino-acid chain: Sodium-dependent neutral amino acid transporter B(0)AT2 (730 aa).

Positions 1-24 (MPKNSKVVKRELDDDVTESVKDLL) are disordered. At 1–70 (MPKNSKVVKR…RPAWSSKLQY (70 aa)) the chain is on the extracellular side. 2 positions are modified to phosphoserine: Ser-25 and Ser-55. The next 3 helical transmembrane spans lie at 71–91 (ILAQVGFSVGLGNVWRFPYLC), 97–117 (GAYLLPYLILLMVIGIPLFFL), and 149–169 (VVCYFVALYYNVIIGWSLFYF). Topologically, residues 170–223 (SQSFQQPLPWDQCPLVKNASHTFVEPECEQSSATTYYWYREALNISSSISESGG) are cytoplasmic. The next 2 helical transmembrane spans lie at 224-244 (LNWKMTICLLAAWVMVCLAMI) and 253-273 (IIYFSSLFPYVVLICFLIRAL). N-linked (GlcNAc...) asparagine glycosylation occurs at Asn-276. The next 2 helical transmembrane spans lie at 302-322 (AATQVFFALGLGFGGVIAFSS) and 335-355 (VLVSFINFFTSVLATLVVFAV). Residues 356–458 (LGFKANVINE…AMTHFPASPF (103 aa)) are Cytoplasmic-facing. 5 helical membrane passes run 459–479 (WSVMFFLMLVNLGLGSMFGTI), 494–514 (KEILTVICCLLAFCIGLIFVQ), 530–550 (TLPLLIVVILENIAVCFVYGI), 575–595 (YVSPLMLLSLLIASVVNMGLS), and 619–639 (LVVCVSLVVFAVLPVPVVFIV). Topologically, residues 640–730 (RRFNLIDDSS…IMPDMPESDL (91 aa)) are extracellular. A phosphoserine mark is found at Ser-687, Ser-699, and Ser-701.

This sequence belongs to the sodium:neurotransmitter symporter (SNF) (TC 2.A.22) family. SLC6A15 subfamily.

It localises to the membrane. It carries out the reaction L-leucine(in) + Na(+)(in) = L-leucine(out) + Na(+)(out). It catalyses the reaction L-isoleucine(in) + Na(+)(in) = L-isoleucine(out) + Na(+)(out). The catalysed reaction is L-methionine(in) + Na(+)(in) = L-methionine(out) + Na(+)(out). The enzyme catalyses L-proline(in) + Na(+)(in) = L-proline(out) + Na(+)(out). It carries out the reaction L-alanine(in) + Na(+)(in) = L-alanine(out) + Na(+)(out). It catalyses the reaction L-asparagine(in) + Na(+)(in) = L-asparagine(out) + Na(+)(out). The catalysed reaction is L-valine(in) + Na(+)(in) = L-valine(out) + Na(+)(out). The enzyme catalyses L-cysteine(in) + Na(+)(in) = L-cysteine(out) + Na(+)(out). It carries out the reaction L-glutamine(in) + Na(+)(in) = L-glutamine(out) + Na(+)(out). It catalyses the reaction L-serine(in) + Na(+)(in) = L-serine(out) + Na(+)(out). The catalysed reaction is L-threonine(in) + Na(+)(in) = L-threonine(out) + Na(+)(out). The enzyme catalyses L-pipecolate(in) + Na(+)(in) = L-pipecolate(out) + Na(+)(out). It carries out the reaction L-phenylalanine(in) + Na(+)(in) = L-phenylalanine(out) + Na(+)(out). Its function is as follows. Functions as a sodium-dependent neutral amino acid transporter. Exhibits preference for the branched-chain amino acids, particularly leucine, valine and isoleucine and methionine. Can also transport low-affinity substrates such as alanine, phenylalanine, glutamine and pipecolic acid. Mediates the saturable, pH-sensitive and electrogenic cotransport of proline and sodium ions with a stoichiometry of 1:1. May have a role as transporter for neurotransmitter precursors into neurons. In contrast to other members of the neurotransmitter transporter family, does not appear to be chloride-dependent. The protein is Sodium-dependent neutral amino acid transporter B(0)AT2 (SLC6A15) of Pongo abelii (Sumatran orangutan).